The chain runs to 513 residues: Histidine ammonia-lyase (513 aa).

A cross-link (5-imidazolinone (Ala-Gly)) is located at residues 143 to 145 (ASG). Position 144 is a 2,3-didehydroalanine (Ser) (Ser-144).

The protein belongs to the PAL/histidase family. Post-translationally, contains an active site 4-methylidene-imidazol-5-one (MIO), which is formed autocatalytically by cyclization and dehydration of residues Ala-Ser-Gly.

Its subcellular location is the cytoplasm. The enzyme catalyses L-histidine = trans-urocanate + NH4(+). Its pathway is amino-acid degradation; L-histidine degradation into L-glutamate; N-formimidoyl-L-glutamate from L-histidine: step 1/3. This chain is Histidine ammonia-lyase, found in Xanthomonas campestris pv. campestris (strain B100).